A 366-amino-acid polypeptide reads, in one-letter code: Phospho-N-acetylmuramoyl-pentapeptide-transferase (366 aa).

A run of 10 helical transmembrane segments spans residues 27-47, 71-91, 93-113, 134-154, 174-194, 205-225, 245-265, 268-288, 294-314, and 343-363; these read AALF…INSL, TPTM…LLWA, LSNV…AIGF, LGIE…TALA, FLIN…VGAG, GLAI…AYLA, LAVV…FNAP, AIFM…TVAV, IVMA…IIQV, and QVVI…LSTL.

This sequence belongs to the glycosyltransferase 4 family. MraY subfamily. Mg(2+) serves as cofactor.

It localises to the cell inner membrane. It carries out the reaction UDP-N-acetyl-alpha-D-muramoyl-L-alanyl-gamma-D-glutamyl-meso-2,6-diaminopimeloyl-D-alanyl-D-alanine + di-trans,octa-cis-undecaprenyl phosphate = di-trans,octa-cis-undecaprenyl diphospho-N-acetyl-alpha-D-muramoyl-L-alanyl-D-glutamyl-meso-2,6-diaminopimeloyl-D-alanyl-D-alanine + UMP. The protein operates within cell wall biogenesis; peptidoglycan biosynthesis. In terms of biological role, catalyzes the initial step of the lipid cycle reactions in the biosynthesis of the cell wall peptidoglycan: transfers peptidoglycan precursor phospho-MurNAc-pentapeptide from UDP-MurNAc-pentapeptide onto the lipid carrier undecaprenyl phosphate, yielding undecaprenyl-pyrophosphoryl-MurNAc-pentapeptide, known as lipid I. The sequence is that of Phospho-N-acetylmuramoyl-pentapeptide-transferase from Rhizobium etli (strain ATCC 51251 / DSM 11541 / JCM 21823 / NBRC 15573 / CFN 42).